The sequence spans 91 residues: Large ribosomal subunit protein uL23c (91 aa).

This sequence belongs to the universal ribosomal protein uL23 family. As to quaternary structure, part of the 50S ribosomal subunit.

Its subcellular location is the plastid. The protein resides in the chloroplast. Functionally, binds to 23S rRNA. This is Large ribosomal subunit protein uL23c (rpl23) from Huperzia lucidula (Shining clubmoss).